Here is a 172-residue protein sequence, read N- to C-terminus: Adenine phosphoribosyltransferase (172 aa).

Belongs to the purine/pyrimidine phosphoribosyltransferase family. As to quaternary structure, homodimer.

The protein resides in the cytoplasm. The catalysed reaction is AMP + diphosphate = 5-phospho-alpha-D-ribose 1-diphosphate + adenine. The protein operates within purine metabolism; AMP biosynthesis via salvage pathway; AMP from adenine: step 1/1. Its function is as follows. Catalyzes a salvage reaction resulting in the formation of AMP, that is energically less costly than de novo synthesis. The polypeptide is Adenine phosphoribosyltransferase (Polynucleobacter asymbioticus (strain DSM 18221 / CIP 109841 / QLW-P1DMWA-1) (Polynucleobacter necessarius subsp. asymbioticus)).